Reading from the N-terminus, the 176-residue chain is Pituitary adenylate cyclase-activating polypeptide (176 aa).

A signal peptide spans 1 to 24 (MTMCSGARLALLVYGILMHSSVYG). Positions 25-80 (SPAASGLRFPGIRPENEAYDEDGNPQQDFYDSEPPGVGSPASALRDAYALYYPAEE) are excised as a propeptide. Disordered stretches follow at residues 36–62 (IRPE…PGVG) and 115–134 (GTPG…RHSD). The tract at residues 150 to 158 (VKKYLAAVL) is important for receptor binding. Residue Leu158 is modified to Leucine amide. A Lysine amide modification is found at Lys169. Residues 173 to 176 (IPYL) constitute a propeptide that is removed on maturation.

It belongs to the glucagon family.

It is found in the secreted. Functionally, PACAP is a neuropeptide involved in diverse array of physiological processes through activating the PACAP subfamily of class B1 G protein-coupled receptors: VIP receptor 1 (VIPR1), VIP receptor 2 (VIPR2), and PACAP type I receptor (ADCYAP1R1). Exerts neuroprotective and general cytoprotective effects due to anti-apoptotic, anti-inflammatory, and antioxidant actions. Promotes neuron projection development through the RAPGEF2/Rap1/B-Raf/ERK pathway. In chromaffin cells, induces long-lasting increase of intracellular calcium concentrations and neuroendocrine secretion. Involved in the control of glucose homeostasis, induces insulin secretion by pancreatic beta cells. PACAP exists in two bioactive forms from proteolysis of the same precursor protein, PACAP27 and PACAP38, which differ by eleven amino acid residues in the C-terminus. The polypeptide is Pituitary adenylate cyclase-activating polypeptide (ADCYAP1) (Ovis aries (Sheep)).